A 336-amino-acid chain; its full sequence is 25S rRNA (uridine(2634)-N(3))-methyltransferase (336 aa).

The tract at residues 286-307 is disordered; that stretch reads PGYHHRRTNSEQDTTKPAKERD. Over residues 293-307 the composition is skewed to basic and acidic residues; it reads TNSEQDTTKPAKERD.

Belongs to the class I-like SAM-binding methyltransferase superfamily. BMT5 family.

Its subcellular location is the nucleus. It localises to the nucleolus. The enzyme catalyses uridine(2634) in 25S rRNA + S-adenosyl-L-methionine = N(3)-methyluridine(2634) in 25S rRNA + S-adenosyl-L-homocysteine + H(+). S-adenosyl-L-methionine-dependent methyltransferase that specifically methylates the N(3) position of uridine 2634 (m3U2634) in 25S rRNA. The chain is 25S rRNA (uridine(2634)-N(3))-methyltransferase (BMT5) from Saccharomyces cerevisiae (strain ATCC 204508 / S288c) (Baker's yeast).